The sequence spans 241 residues: uncharacterized protein (241 aa).

Its subcellular location is the cytoplasm. It is found in the nucleus. This is an uncharacterized protein from Schizosaccharomyces pombe (strain 972 / ATCC 24843) (Fission yeast).